The primary structure comprises 172 residues: Adenine phosphoribosyltransferase (172 aa).

This sequence belongs to the purine/pyrimidine phosphoribosyltransferase family. In terms of assembly, homodimer.

It is found in the cytoplasm. It carries out the reaction AMP + diphosphate = 5-phospho-alpha-D-ribose 1-diphosphate + adenine. It functions in the pathway purine metabolism; AMP biosynthesis via salvage pathway; AMP from adenine: step 1/1. Functionally, catalyzes a salvage reaction resulting in the formation of AMP, that is energically less costly than de novo synthesis. This is Adenine phosphoribosyltransferase from Streptococcus mutans serotype c (strain ATCC 700610 / UA159).